We begin with the raw amino-acid sequence, 389 residues long: S-adenosylmethionine synthase (389 aa).

Residue His-15 participates in ATP binding. Position 17 (Asp-17) interacts with Mg(2+). Glu-43 is a K(+) binding site. L-methionine contacts are provided by Glu-56 and Gln-99. The segment at 99 to 109 is flexible loop; the sequence is QSPDIAQGVNE. Residues 166–168, 234–235, Asp-243, 249–250, Ala-266, and Lys-270 contribute to the ATP site; these read DAK, RF, and RK. Position 243 (Asp-243) interacts with L-methionine. Position 274 (Lys-274) interacts with L-methionine.

This sequence belongs to the AdoMet synthase family. In terms of assembly, homotetramer; dimer of dimers. It depends on Mg(2+) as a cofactor. The cofactor is K(+).

It localises to the cytoplasm. It carries out the reaction L-methionine + ATP + H2O = S-adenosyl-L-methionine + phosphate + diphosphate. Its pathway is amino-acid biosynthesis; S-adenosyl-L-methionine biosynthesis; S-adenosyl-L-methionine from L-methionine: step 1/1. Functionally, catalyzes the formation of S-adenosylmethionine (AdoMet) from methionine and ATP. The overall synthetic reaction is composed of two sequential steps, AdoMet formation and the subsequent tripolyphosphate hydrolysis which occurs prior to release of AdoMet from the enzyme. The chain is S-adenosylmethionine synthase from Neisseria meningitidis serogroup C / serotype 2a (strain ATCC 700532 / DSM 15464 / FAM18).